The sequence spans 161 residues: 6,7-dimethyl-8-ribityllumazine synthase (161 aa).

5-amino-6-(D-ribitylamino)uracil is bound by residues Trp-26, 58-60, and 81-83; these read AFE and VVI. (2S)-2-hydroxy-3-oxobutyl phosphate is bound at residue 86–87; it reads GT. Residue His-89 is the Proton donor of the active site. Phe-114 provides a ligand contact to 5-amino-6-(D-ribitylamino)uracil. Arg-128 contacts (2S)-2-hydroxy-3-oxobutyl phosphate.

Belongs to the DMRL synthase family.

It catalyses the reaction (2S)-2-hydroxy-3-oxobutyl phosphate + 5-amino-6-(D-ribitylamino)uracil = 6,7-dimethyl-8-(1-D-ribityl)lumazine + phosphate + 2 H2O + H(+). It functions in the pathway cofactor biosynthesis; riboflavin biosynthesis; riboflavin from 2-hydroxy-3-oxobutyl phosphate and 5-amino-6-(D-ribitylamino)uracil: step 1/2. Functionally, catalyzes the formation of 6,7-dimethyl-8-ribityllumazine by condensation of 5-amino-6-(D-ribitylamino)uracil with 3,4-dihydroxy-2-butanone 4-phosphate. This is the penultimate step in the biosynthesis of riboflavin. In Nocardioides sp. (strain ATCC BAA-499 / JS614), this protein is 6,7-dimethyl-8-ribityllumazine synthase.